A 605-amino-acid chain; its full sequence is Pyruvate decarboxylase 1 (605 aa).

Substrate is bound by residues Asp67 and His154. Residues 432-514 (DSWFNCQKLR…FLINNGGYTI (83 aa)) are thiamine pyrophosphate binding. Residues Asp482, Asn509, and Gly511 each coordinate Mg(2+). Glu515 is a binding site for substrate.

The protein belongs to the TPP enzyme family. As to quaternary structure, homotetramer. Requires a metal cation as cofactor. Thiamine diphosphate is required as a cofactor.

It catalyses the reaction a 2-oxocarboxylate + H(+) = an aldehyde + CO2. The sequence is that of Pyruvate decarboxylase 1 (PDC1) from Oryza sativa subsp. indica (Rice).